The following is a 75-amino-acid chain: ATP synthase subunit epsilon, mitochondrial (75 aa).

Residues 1–9 constitute a mitochondrion transit peptide; it reads MIRRSCALL.

This sequence belongs to the eukaryotic ATPase epsilon family. As to quaternary structure, F-type ATPases have 2 components, F(1) - the catalytic core - and F(o) - the membrane proton channel. F(1) has five subunits: alpha(3), beta(3), gamma(1), delta(1), epsilon(1), plus the additional subunit P18 (Tb427.05.1710) that is not present in F(1)F(o) ATP synthase from metazoa. Subunit P18 (Tb927.5.1710) interacts with the alpha subunit with a 1:1 stoichiometry; the interaction is direct. Subunit gamma is part of the central stalk. F(o) has three main subunits: a, b and c. The trypanosomal ATPase complex contains additional subunits that are not present in the F(1)F(o) ATP synthase from metazoa.

It is found in the mitochondrion. The protein localises to the mitochondrion inner membrane. Functionally, mitochondrial membrane ATP synthase (F(1)F(o) ATP synthase) produces ATP from ADP in the presence of a proton gradient across the membrane which is generated by electron transport complexes of the respiratory chain. F-type ATPases consist of two structural domains, F(1) - containing the extramembraneous catalytic core, and F(o) - containing the membrane proton channel, linked together by a central stalk and a peripheral stalk. During catalysis, ATP synthesis in the catalytic domain of F(1) is coupled via a rotary mechanism of the central stalk subunits to proton translocation. Subunits alpha and beta form the catalytic core in F(1). Rotation of the central stalk against the surrounding alpha(3)beta(3) subunits leads to hydrolysis of ATP in three separate catalytic sites on the beta subunits. Contrary to the procyclic, insect form that requires F(1)F(o) ATP synthase for ATP synthesis, the bloodstream form relies on ATP hydrolysis by F(1)F(o) ATP synthase to maintain its mitochondrial membrane potential. This Trypanosoma brucei brucei protein is ATP synthase subunit epsilon, mitochondrial.